The primary structure comprises 205 residues: MYRIKDEWGEFLVRLARRAIEEYVRNGRTIEPPEGTPPELWEKMGVFVTLNRHNVPPQMSLRGCIGFPLPIYPLVEATIKAAIYAAVDDPRFPPVKESELDDIVIEVSVLTPPELIEGPPEERPRKIKVGRDGLIIEKGIHSGLLLPQVPIEWGWDEEEFLAQTCWKAGLPPDCWLDEDTKVYRFTAEIFEEEYPKGPVKRKPLV.

One can recognise an AMMECR1 domain in the interval 7 to 201 (EWGEFLVRLA…EEYPKGPVKR (195 aa)).

This chain is Protein TON_1965, found in Thermococcus onnurineus (strain NA1).